Consider the following 147-residue polypeptide: Prefoldin subunit alpha (147 aa).

It belongs to the prefoldin alpha subunit family. In terms of assembly, heterohexamer of two alpha and four beta subunits.

It is found in the cytoplasm. Molecular chaperone capable of stabilizing a range of proteins. Seems to fulfill an ATP-independent, HSP70-like function in archaeal de novo protein folding. The chain is Prefoldin subunit alpha from Saccharolobus islandicus (strain M.16.27) (Sulfolobus islandicus).